Consider the following 273-residue polypeptide: 2,3,4,5-tetrahydropyridine-2,6-dicarboxylate N-succinyltransferase (273 aa).

Substrate-binding residues include arginine 104 and aspartate 141.

Belongs to the transferase hexapeptide repeat family. In terms of assembly, homotrimer.

It is found in the cytoplasm. The catalysed reaction is (S)-2,3,4,5-tetrahydrodipicolinate + succinyl-CoA + H2O = (S)-2-succinylamino-6-oxoheptanedioate + CoA. Its pathway is amino-acid biosynthesis; L-lysine biosynthesis via DAP pathway; LL-2,6-diaminopimelate from (S)-tetrahydrodipicolinate (succinylase route): step 1/3. The protein is 2,3,4,5-tetrahydropyridine-2,6-dicarboxylate N-succinyltransferase of Nitrosococcus oceani (strain ATCC 19707 / BCRC 17464 / JCM 30415 / NCIMB 11848 / C-107).